We begin with the raw amino-acid sequence, 823 residues long: Sphingomyelin phosphodiesterase 4 (823 aa).

2 positions are modified to phosphoserine: Ser130 and Ser245. A Phosphothreonine modification is found at Thr665. At Ser749 the chain carries Phosphoserine. The chain crosses the membrane as a helical span at residues 776 to 796 (LLLLLMAFFVASLFCIGPLSC).

Mg(2+) is required as a cofactor. As to expression, expressed in skeletal muscle (at protein level). In terms of tissue distribution, expressed in skeletal muscle but a lower levels than isoform 1 (at protein level).

It localises to the endoplasmic reticulum membrane. The protein resides in the golgi apparatus membrane. The protein localises to the nucleus envelope. Its subcellular location is the cell membrane. It is found in the sarcolemma. The enzyme catalyses a sphingomyelin + H2O = phosphocholine + an N-acylsphing-4-enine + H(+). With respect to regulation, activated by phosphatidylserine and tumor necrosis factor (TNF). Inhibited by scyphostatin. Catalyzes the hydrolysis of membrane sphingomyelin to form phosphorylcholine and ceramide. It has a relevant role in the homeostasis of membrane sphingolipids, thereby influencing membrane integrity, and endoplasmic reticulum organization and function. May sensitize cells to DNA damage-induced apoptosis. In skeletal muscle, mediates TNF-stimulated oxidant production. The polypeptide is Sphingomyelin phosphodiesterase 4 (Smpd4) (Mus musculus (Mouse)).